A 90-amino-acid polypeptide reads, in one-letter code: UPF0223 protein lmo1058 (90 aa).

It belongs to the UPF0223 family.

The chain is UPF0223 protein lmo1058 from Listeria monocytogenes serovar 1/2a (strain ATCC BAA-679 / EGD-e).